Reading from the N-terminus, the 253-residue chain is 5'/3'-nucleotidase SurE (253 aa).

Positions 8, 9, 39, and 92 each coordinate a divalent metal cation.

It belongs to the SurE nucleotidase family. Requires a divalent metal cation as cofactor.

It is found in the cytoplasm. The catalysed reaction is a ribonucleoside 5'-phosphate + H2O = a ribonucleoside + phosphate. It catalyses the reaction a ribonucleoside 3'-phosphate + H2O = a ribonucleoside + phosphate. It carries out the reaction [phosphate](n) + H2O = [phosphate](n-1) + phosphate + H(+). In terms of biological role, nucleotidase with a broad substrate specificity as it can dephosphorylate various ribo- and deoxyribonucleoside 5'-monophosphates and ribonucleoside 3'-monophosphates with highest affinity to 3'-AMP. Also hydrolyzes polyphosphate (exopolyphosphatase activity) with the preference for short-chain-length substrates (P20-25). Might be involved in the regulation of dNTP and NTP pools, and in the turnover of 3'-mononucleotides produced by numerous intracellular RNases (T1, T2, and F) during the degradation of various RNAs. In Klebsiella pneumoniae (strain 342), this protein is 5'/3'-nucleotidase SurE.